Here is an 807-residue protein sequence, read N- to C-terminus: 85/88 kDa calcium-independent phospholipase A2 (807 aa).

Serine 13 is modified (phosphoserine). 9 ANK repeats span residues tryptophan 120–threonine 147, glutamate 151–valine 181, lysine 185–glutamine 215, glutamine 219–isoleucine 248, proline 251–serine 281, tyrosine 286–serine 312, serine 316–alanine 345, histidine 349–threonine 378, and phenylalanine 382–leucine 403. 2 helical membrane-spanning segments follow: residues leucine 481–isoleucine 501 and leucine 512–serine 532. The PNPLA domain maps to leucine 482 to methionine 666. Positions glycine 486 to glycine 491 match the GXGXXG motif. The short motif at glycine 518–glycine 522 is the GXSXG element. Serine 520 acts as the Nucleophile in catalysis. The Proton acceptor role is filled by aspartate 653. The DGA/G motif lies at aspartate 653–glycine 655. A calmodulin-binding (1-9-14 motif) region spans residues arginine 678–lysine 687. A calmodulin-binding (IQ motif) region spans residues alanine 749–arginine 760.

Homodimer formed by catalytic domains tightly interacting through a large hydrophobic interface. The contact area involves 3 alpha helices, several loops and a part of the beta sheet from each monomer. Both active sites of the dimer are in close proximity adopting an open conformation that provide sufficient space for phospholipid access and favoring cooperativity in deacylation-reacylation reactions. Each monomer has 9 ankyrin repeats stacked side-by-side in an elongated structure oriented outwards from the catalytic core. As to expression, expressed in neurons of central and peripheral nervous system. Highly expressed in Purkinje cells in cerebellum and dorsal and ventral horn neurons in the spinal cord. Expressed in testis (at protein level). Expressed in skeletal muscle (at protein level).

It localises to the cytoplasm. The protein localises to the cell membrane. The protein resides in the mitochondrion. It is found in the cell projection. Its subcellular location is the pseudopodium. The enzyme catalyses a 1,2-diacyl-sn-glycero-3-phosphocholine + H2O = a 1-acyl-sn-glycero-3-phosphocholine + a fatty acid + H(+). The catalysed reaction is a 1-O-alkyl-2-acyl-sn-glycero-3-phosphocholine + H2O = a 1-O-alkyl-sn-glycero-3-phosphocholine + a fatty acid + H(+). It carries out the reaction 1,2-dihexadecanoyl-sn-glycero-3-phosphocholine + H2O = 1-hexadecanoyl-sn-glycero-3-phosphocholine + hexadecanoate + H(+). It catalyses the reaction 1-hexadecanoyl-2-(9Z-octadecenoyl)-sn-glycero-3-phosphocholine + H2O = 1-hexadecanoyl-sn-glycero-3-phosphocholine + (9Z)-octadecenoate + H(+). The enzyme catalyses 1-hexadecanoyl-2-(9Z,12Z-octadecadienoyl)-sn-glycero-3-phosphocholine + H2O = (9Z,12Z)-octadecadienoate + 1-hexadecanoyl-sn-glycero-3-phosphocholine + H(+). The catalysed reaction is 1-hexadecanoyl-2-(5Z,8Z,11Z,14Z-eicosatetraenoyl)-sn-glycero-3-phosphocholine + H2O = 1-hexadecanoyl-sn-glycero-3-phosphocholine + (5Z,8Z,11Z,14Z)-eicosatetraenoate + H(+). It carries out the reaction 1-octadecanoyl-2-(5Z,8Z,11Z,14Z-eicosatetraenoyl)-sn-glycero-3-phosphocholine + H2O = 1-octadecanoyl-sn-glycero-3-phosphocholine + (5Z,8Z,11Z,14Z)-eicosatetraenoate + H(+). It catalyses the reaction 1-hexadecanoyl-2-(5Z,8Z,11Z,14Z-eicosatetraenoyl)-sn-glycero-3-phosphoethanolamine + H2O = 1-hexadecanoyl-sn-glycero-3-phosphoethanolamine + (5Z,8Z,11Z,14Z)-eicosatetraenoate + H(+). The enzyme catalyses 1,2-dihexadecanoyl-sn-glycero-3-phosphate + H2O = 1-hexadecanoyl-sn-glycero-3-phosphate + hexadecanoate + H(+). The catalysed reaction is a 1-acyl-sn-glycero-3-phosphocholine + H2O = sn-glycerol 3-phosphocholine + a fatty acid + H(+). It carries out the reaction 1-hexadecanoyl-sn-glycero-3-phosphocholine + H2O = sn-glycerol 3-phosphocholine + hexadecanoate + H(+). It catalyses the reaction 1-(5Z,8Z,11Z,14Z-eicosatetraenoyl)-sn-glycero-3-phosphocholine + H2O = sn-glycerol 3-phosphocholine + (5Z,8Z,11Z,14Z)-eicosatetraenoate + H(+). The enzyme catalyses 2-(5Z,8Z,11Z,14Z)-eicosatetraenoyl-sn-glycero-3-phosphocholine + H2O = sn-glycerol 3-phosphocholine + (5Z,8Z,11Z,14Z)-eicosatetraenoate + H(+). The catalysed reaction is 1-O-hexadecyl-2-(5Z,8Z,11Z,14Z)-eicosatetraenoyl-sn-glycero-3-phosphocholine + H2O = 1-O-hexadecyl-sn-glycero-3-phosphocholine + (5Z,8Z,11Z,14Z)-eicosatetraenoate + H(+). It carries out the reaction 1-O-hexadecyl-2-acetyl-sn-glycero-3-phosphocholine + H2O = 1-O-hexadecyl-sn-glycero-3-phosphocholine + acetate + H(+). It catalyses the reaction hexadecanoyl-CoA + H2O = hexadecanoate + CoA + H(+). The enzyme catalyses 1',3'-bis[1,2-di-(9Z-octadecenoyl)-sn-glycero-3-phospho]-glycerol + H2O = 1'-[1,2-di-(9Z-octadecenoyl)-sn-glycero-3-phospho]-3'-[1-(9Z-octadecenoyl)-sn-glycero-3-phospho]-glycerol + (9Z)-octadecenoate + H(+). The catalysed reaction is 1'-[1,2-di-(9Z-octadecenoyl)-sn-glycero-3-phospho]-3'-[1-(9Z-octadecenoyl)-sn-glycero-3-phospho]-glycerol + H2O = 1',3'-bis-[1-(9Z-octadecenoyl)-sn-glycero-3-phospho]-glycerol + (9Z)-octadecenoate + H(+). It carries out the reaction 1',3'-bis-[1,2-di-(9Z,12Z-octadecadienoyl)-sn-glycero-3-phospho]-glycerol + H2O = 1'-[1,2-di-(9Z,12Z-octadecadienoyl)-sn-glycero-3-phospho]-3'-[1-(9Z,12Z-octadecadienoyl)-sn-glycero-3-phospho]-glycerol + (9Z,12Z)-octadecadienoate + H(+). It catalyses the reaction 1-octadecanoyl-2-(15-hydroxy-(5Z,8Z,11Z,13E)-eicosatetraenoyl)-sn-glycero-3-phosphoethanolamine + H2O = 1-octadecanoyl-sn-glycero-3-phosphoethanolamine + 15-hydroxy-(5Z,8Z,11Z,13E)-eicosatetraenoate + H(+). With respect to regulation, inhibited by calcium-activated calmodulin. Activated by ATP. Inhibited by bromoenol lactone (BEL). In terms of biological role, calcium-independent phospholipase involved in phospholipid remodeling with implications in cellular membrane homeostasis, mitochondrial integrity and signal transduction. Hydrolyzes the ester bond of the fatty acyl group attached at sn-1 or sn-2 position of phospholipids (phospholipase A1 and A2 activity respectively), producing lysophospholipids that are used in deacylation-reacylation cycles. Hydrolyzes both saturated and unsaturated long fatty acyl chains in various glycerophospholipid classes such as phosphatidylcholines, phosphatidylethanolamines and phosphatidates, with a preference for hydrolysis at sn-2 position. Can further hydrolyze lysophospholipids carrying saturated fatty acyl chains (lysophospholipase activity). Upon oxidative stress, contributes to remodeling of mitochondrial phospholipids in pancreatic beta cells, in a repair mechanism to reduce oxidized lipid content. Preferentially hydrolyzes oxidized polyunsaturated fatty acyl chains from cardiolipins, yielding monolysocardiolipins that can be reacylated with unoxidized fatty acyls to regenerate native cardiolipin species. Hydrolyzes oxidized glycerophosphoethanolamines present in pancreatic islets, releasing oxidized polyunsaturated fatty acids such as hydroxyeicosatetraenoates (HETEs). Has thioesterase activity toward fatty-acyl CoA releasing CoA-SH known to facilitate fatty acid transport and beta-oxidation in mitochondria particularly in skeletal muscle. Plays a role in regulation of membrane dynamics and homeostasis. Selectively hydrolyzes sn-2 arachidonoyl group in plasmalogen phospholipids, structural components of lipid rafts and myelin. Regulates F-actin polymerization at the pseudopods, which is required for both speed and directionality of MCP1/CCL2-induced monocyte chemotaxis. Targets membrane phospholipids to produce potent lipid signaling messengers. Generates lysophosphatidate (LPA, 1-acyl-glycerol-3-phosphate), which acts via G-protein receptors in various cell types. Has phospholipase A2 activity toward platelet-activating factor (PAF, 1-O-alkyl-2-acetyl-sn-glycero-3-phosphocholine), likely playing a role in inactivation of this potent pro-inflammatory signaling lipid. In response to glucose, amplifies calcium influx in pancreatic beta cells to promote INS secretion. The sequence is that of 85/88 kDa calcium-independent phospholipase A2 (Pla2g6) from Mus musculus (Mouse).